A 397-amino-acid chain; its full sequence is uncharacterized protein (397 aa).

Phosphoserine occurs at positions 115 and 141. Residues 135–156 are disordered; the sequence is NSLNHDSPPHTPARRSDNSTSK. K239 is covalently cross-linked (Glycyl lysine isopeptide (Lys-Gly) (interchain with G-Cter in SUMO2)). 2 positions are modified to phosphoserine: S269 and S296. The tract at residues 289-316 is disordered; the sequence is GRGPTKASPQPALTVKAKATSSATTLAS. Over residues 300-316 the composition is skewed to low complexity; sequence ALTVKAKATSSATTLAS. S342 is subject to Phosphoserine. The tract at residues 354 to 397 is disordered; it reads SEAQDSQVTSTKSPTVRCIVPDPPAPLASQRPPRRRWRRTCKDC. Polar residues predominate over residues 356–367; that stretch reads AQDSQVTSTKSP. Basic residues predominate over residues 385 to 397; that stretch reads PPRRRWRRTCKDC.

This is an uncharacterized protein from Rattus norvegicus (Rat).